The following is a 362-amino-acid chain: Phosphoserine aminotransferase (362 aa).

An L-glutamate-binding site is contributed by R43. Pyridoxal 5'-phosphate contacts are provided by residues 77–78 (AT), W103, T153, D173, and Q196. An N6-(pyridoxal phosphate)lysine modification is found at K197. Residue 238 to 239 (NT) coordinates pyridoxal 5'-phosphate.

This sequence belongs to the class-V pyridoxal-phosphate-dependent aminotransferase family. SerC subfamily. In terms of assembly, homodimer. Pyridoxal 5'-phosphate is required as a cofactor.

It is found in the cytoplasm. The catalysed reaction is O-phospho-L-serine + 2-oxoglutarate = 3-phosphooxypyruvate + L-glutamate. The enzyme catalyses 4-(phosphooxy)-L-threonine + 2-oxoglutarate = (R)-3-hydroxy-2-oxo-4-phosphooxybutanoate + L-glutamate. It functions in the pathway amino-acid biosynthesis; L-serine biosynthesis; L-serine from 3-phospho-D-glycerate: step 2/3. Its pathway is cofactor biosynthesis; pyridoxine 5'-phosphate biosynthesis; pyridoxine 5'-phosphate from D-erythrose 4-phosphate: step 3/5. Catalyzes the reversible conversion of 3-phosphohydroxypyruvate to phosphoserine and of 3-hydroxy-2-oxo-4-phosphonooxybutanoate to phosphohydroxythreonine. The protein is Phosphoserine aminotransferase of Xylella fastidiosa (strain 9a5c).